The sequence spans 241 residues: Transcription initiation factor TFIID subunit 14 (241 aa).

In terms of domain architecture, YEATS spans 1-137 (MTTVKRTVRL…PGLLKALTAT (137 aa)). The segment at 141 to 169 (PGYSDEGEEARKDKRKNESEVGAGKKKAK) is disordered. Residues 149–159 (EARKDKRKNES) show a composition bias toward basic and acidic residues.

The protein belongs to the TAF14 family. In terms of assembly, component of the fcp1/TFIIF/polII complex via interaction of tfg3 with both tfg1/TFIIF-alpha and tfg2/TFIIF-beta subunits. Component of the SWI/SNF global transcription activator complex composed of at least arp9, arp42, snf5, snf22, snf30, sbf59, sol1, ssr1, ssr2, ssr3, ssr4 and tfg3. Also interacts with the TATA-binding protein (TBP). Component of the mst2 complex composed of at least eaf6, mst2, nto1, pdp3, ptf1, ptf2 and tfg3.

It localises to the nucleus. The protein localises to the nucleoplasm. Functionally, functions as a component of the DNA-binding general transcription factor complex TFIID, and the RNA polymerase II associated general transcription factor complex TFIIF. Binding of TFIID to a promoter (with or without TATA element) is the initial step in preinitiation complex (PIC) formation. TFIID plays a key role in the regulation of gene expression by RNA polymerase II through different activities such as transcription activator interaction, core promoter recognition and selectivity, TFIIA and TFIIB interaction, facilitation of DNA opening and initiation of transcription. TFIIF is essential for the initiation of transcription by RNA polymerase II. TFIIF functions include the recruitment of RNA polymerase II to the promoter bound DNA-TBP-TFIIB complex, decreasing the affinity of RNA polymerase II for non-specific DNA, allowing for the subsequent recruitment of TFIIE and TFIIH, and facilitating RNA polymerase II elongation. The TAF14 subunit has stimulatory activity. Component of the SWI/SNF complex, an ATP-dependent chromatin remodeling complex, required for the positive and negative regulation of gene expression of a large number of genes. It changes chromatin structure by altering DNA-histone contacts within a nucleosome, leading eventually to a change in nucleosome position, thus facilitating or repressing binding of gene-specific transcription factors. Component of the mst2 complex which is a highly specific H3 lysine 14 (H3K14) acetyltransferase that functions together with gcn5 to regulate global levels of H3K14 acetylation (H3K14ac), critical for DNA damage checkpoint activation. In Schizosaccharomyces pombe (strain 972 / ATCC 24843) (Fission yeast), this protein is Transcription initiation factor TFIID subunit 14 (tfg3).